A 463-amino-acid polypeptide reads, in one-letter code: Asparagine--tRNA ligase (463 aa).

The protein belongs to the class-II aminoacyl-tRNA synthetase family. As to quaternary structure, homodimer.

Its subcellular location is the cytoplasm. The enzyme catalyses tRNA(Asn) + L-asparagine + ATP = L-asparaginyl-tRNA(Asn) + AMP + diphosphate + H(+). The chain is Asparagine--tRNA ligase from Bacillus cereus (strain ZK / E33L).